A 544-amino-acid chain; its full sequence is MTKFIFVTGGVVSSLGKGIAAASIAAILESRGLNVTMLKLDPYINVDPGTMSPFQHGEVFVTDDGAETDLDLGHYERFIDSTMTRRNSFSTGQVYENVIAKERRGDYLGGTVQVIPHITDEIKRRIHEGAAGYDVAIVEIGGTVGDIESLPFLEAIRQMRSQLGRNNTLFAHLSYVPYIAAAGEIKTKPTQHTVKEMLSIGLQPDILICRMDRTMPADERRKIALFCNVEERAIVGSYDVDSIYECPEMLHDQGIDNIITEQLQLNVQQADLTAWKKIVHAIQNPKHTVKIAMVGKYVDLTESYKSLIEALKHAGVHTETDVQITFVDSESIEKNNGDVSMLKDMDAILVPGGFGSRGVEGKIAAVRYARENNVPYLGICLGMQIALIEYARDVAGLKGANSTEFDLKCAAPVVALIDEWQTADGSVETRDESADLGGTMRLGAQEVELKAGSLAAKIYGSEHIRERHRHRYEVNNNYVPTLEQAGLVIGGVSAGRERLVETIELPNHPWFFACQFHPEFTSNPRKGHPLFTAFVKAALNNKKA.

The segment at 1 to 265 (MTKFIFVTGG…DNIITEQLQL (265 aa)) is amidoligase domain. S13 provides a ligand contact to CTP. A UTP-binding site is contributed by S13. Residues 14–19 (SLGKGI) and D71 contribute to the ATP site. Mg(2+) contacts are provided by D71 and E139. CTP contacts are provided by residues 146-148 (DIE), 186-191 (KTKPTQ), and K222. Residues 186–191 (KTKPTQ) and K222 contribute to the UTP site. The 255-residue stretch at 290 to 544 (KIAMVGKYVD…VKAALNNKKA (255 aa)) folds into the Glutamine amidotransferase type-1 domain. Residue G353 coordinates L-glutamine. The active-site Nucleophile; for glutamine hydrolysis is the C380. Residues 381–384 (LGMQ), E404, and R471 contribute to the L-glutamine site. Residues H517 and E519 contribute to the active site.

The protein belongs to the CTP synthase family. As to quaternary structure, homotetramer.

The catalysed reaction is UTP + L-glutamine + ATP + H2O = CTP + L-glutamate + ADP + phosphate + 2 H(+). The enzyme catalyses L-glutamine + H2O = L-glutamate + NH4(+). It catalyses the reaction UTP + NH4(+) + ATP = CTP + ADP + phosphate + 2 H(+). Its pathway is pyrimidine metabolism; CTP biosynthesis via de novo pathway; CTP from UDP: step 2/2. With respect to regulation, allosterically activated by GTP, when glutamine is the substrate; GTP has no effect on the reaction when ammonia is the substrate. The allosteric effector GTP functions by stabilizing the protein conformation that binds the tetrahedral intermediate(s) formed during glutamine hydrolysis. Inhibited by the product CTP, via allosteric rather than competitive inhibition. Catalyzes the ATP-dependent amination of UTP to CTP with either L-glutamine or ammonia as the source of nitrogen. Regulates intracellular CTP levels through interactions with the four ribonucleotide triphosphates. This Neisseria meningitidis serogroup A / serotype 4A (strain DSM 15465 / Z2491) protein is CTP synthase.